The chain runs to 97 residues: Aspartyl/glutamyl-tRNA(Asn/Gln) amidotransferase subunit C (97 aa).

The disordered stretch occupies residues 68–97; it reads ETGFTQEEALSNAPQQSQGQFRTPKVVESA. Polar residues predominate over residues 70 to 88; the sequence is GFTQEEALSNAPQQSQGQF.

It belongs to the GatC family. Heterotrimer of A, B and C subunits.

The enzyme catalyses L-glutamyl-tRNA(Gln) + L-glutamine + ATP + H2O = L-glutaminyl-tRNA(Gln) + L-glutamate + ADP + phosphate + H(+). It catalyses the reaction L-aspartyl-tRNA(Asn) + L-glutamine + ATP + H2O = L-asparaginyl-tRNA(Asn) + L-glutamate + ADP + phosphate + 2 H(+). Allows the formation of correctly charged Asn-tRNA(Asn) or Gln-tRNA(Gln) through the transamidation of misacylated Asp-tRNA(Asn) or Glu-tRNA(Gln) in organisms which lack either or both of asparaginyl-tRNA or glutaminyl-tRNA synthetases. The reaction takes place in the presence of glutamine and ATP through an activated phospho-Asp-tRNA(Asn) or phospho-Glu-tRNA(Gln). This Akkermansia muciniphila (strain ATCC BAA-835 / DSM 22959 / JCM 33894 / BCRC 81048 / CCUG 64013 / CIP 107961 / Muc) protein is Aspartyl/glutamyl-tRNA(Asn/Gln) amidotransferase subunit C.